The sequence spans 148 residues: Large ribosomal subunit protein uL15 (148 aa).

Residues 1 to 30 (MPSKLRKTRKLRGHVSHGHGRIGKHRKHPG) show a composition bias toward basic residues. A disordered region spans residues 1-38 (MPSKLRKTRKLRGHVSHGHGRIGKHRKHPGGRGNAGGM).

This sequence belongs to the universal ribosomal protein uL15 family. Component of the large ribosomal subunit.

The protein resides in the cytoplasm. Component of the large ribosomal subunit. The ribosome is a large ribonucleoprotein complex responsible for the synthesis of proteins in the cell. The sequence is that of Large ribosomal subunit protein uL15 (rpl27a) from Xenopus laevis (African clawed frog).